Reading from the N-terminus, the 177-residue chain is Isopentenyl-diphosphate Delta-isomerase (177 aa).

Histidine 22 and histidine 28 together coordinate Mn(2+). Positions 26–160 (LRHMAISVFV…PERFTPWLRI (135 aa)) constitute a Nudix hydrolase domain. The active site involves cysteine 62. Histidine 64 is a binding site for Mn(2+). Mg(2+) is bound at residue glutamate 82. Mn(2+)-binding residues include glutamate 108 and glutamate 110. Glutamate 110 is an active-site residue.

The protein belongs to the IPP isomerase type 1 family. Mg(2+) is required as a cofactor. It depends on Mn(2+) as a cofactor.

Its subcellular location is the cytoplasm. The catalysed reaction is isopentenyl diphosphate = dimethylallyl diphosphate. It functions in the pathway isoprenoid biosynthesis; dimethylallyl diphosphate biosynthesis; dimethylallyl diphosphate from isopentenyl diphosphate: step 1/1. Its pathway is porphyrin-containing compound metabolism; chlorophyll biosynthesis. Functionally, catalyzes the 1,3-allylic rearrangement of the homoallylic substrate isopentenyl (IPP) to its highly electrophilic allylic isomer, dimethylallyl diphosphate (DMAPP). The sequence is that of Isopentenyl-diphosphate Delta-isomerase from Cereibacter sphaeroides (strain KD131 / KCTC 12085) (Rhodobacter sphaeroides).